A 445-amino-acid chain; its full sequence is Phosphoglucosamine mutase (445 aa).

S102 acts as the Phosphoserine intermediate in catalysis. S102, D241, D243, and D245 together coordinate Mg(2+). S102 is subject to Phosphoserine.

Belongs to the phosphohexose mutase family. Requires Mg(2+) as cofactor. Post-translationally, activated by phosphorylation.

It carries out the reaction alpha-D-glucosamine 1-phosphate = D-glucosamine 6-phosphate. Functionally, catalyzes the conversion of glucosamine-6-phosphate to glucosamine-1-phosphate. The sequence is that of Phosphoglucosamine mutase from Haemophilus influenzae (strain PittEE).